Reading from the N-terminus, the 129-residue chain is Transcription antitermination protein NusB (129 aa).

It belongs to the NusB family.

Its function is as follows. Involved in transcription antitermination. Required for transcription of ribosomal RNA (rRNA) genes. Binds specifically to the boxA antiterminator sequence of the ribosomal RNA (rrn) operons. This chain is Transcription antitermination protein NusB, found in Staphylococcus aureus (strain N315).